We begin with the raw amino-acid sequence, 549 residues long: Cation/acetate symporter ActP (549 aa).

The next 13 membrane-spanning stretches (helical) occupy residues 33–53 (WQAIIMFLIFVVFTLGITYWA), 77–97 (LAIAGDYMSAASFLGISALVF), 103–123 (GLIYSLGFLVGWPIILFLIAE), 148–168 (ILSACGSLVVVALYLIAQMVG), 183–203 (IAVVLVGVLMMMYVLFGGMLA), 206–226 (WVQIIKAVLLLFGASFMAFMV), 262–282 (ISALSLGLGLMFGTAGLPHIL), 303–323 (GFMGYFYILTFIIGFGAIMLV), 355–375 (LFLGFISAVAFATILAVVAGL), 404–424 (VSKITVLVLGVIAIILGVLFE), 428–448 (IAFMVGLAFAIAASCNFPIIL), 464–484 (GGWLGLLTAVVLMILGPTIWV), and 493–513 (IFPYEYPALFSISVAFLGIWF).

This sequence belongs to the sodium:solute symporter (SSF) (TC 2.A.21) family.

It localises to the cell inner membrane. Transports acetate. This Salmonella agona (strain SL483) protein is Cation/acetate symporter ActP.